Consider the following 782-residue polypeptide: Protein VAC14 homolog (782 aa).

Met-1 is subject to N-acetylmethionine. 4 HEAT repeats span residues Lys-5–Ala-42, Leu-89–Gly-126, Phe-171–Ile-208, and Asp-212–Lys-249. A Phosphothreonine modification is found at Thr-11. Disordered stretches follow at residues Glu-335–Cys-372 and Ser-471–Ser-517. One copy of the HEAT 5 repeat lies at Arg-438–Gly-475. A compositionally biased stretch (low complexity) spans Asp-478 to Leu-488. The residue at position 499 (Thr-499) is a Phosphothreonine. A compositionally biased stretch (polar residues) spans Leu-506–Ser-517. Ser-517 carries the phosphoserine modification. The stretch at Leu-560–Glu-598 is one HEAT 6 repeat. Position 743 is a phosphoserine (Ser-743). A mediates interaction with the PDZ domain of NOS1 region spans residues Gly-773 to Asp-777.

Belongs to the VAC14 family. In terms of assembly, forms pentamers. Component of the PI(3,5)P2 regulatory complex/PAS complex, at least composed of PIKFYVE, FIG4 and VAC14. VAC14 nucleates the assembly of the complex and serves as a scaffold by pentamerizing into a star-shaped structure, which can bind a single copy each of PIKFYVE and FIG4 and coordinates their activities. Interacts with NOS1. As to quaternary structure, (Microbial infection) Interacts with HTLV-1 Tax. Ubiquitously expressed.

The protein resides in the endosome membrane. Its subcellular location is the microsome membrane. Its function is as follows. Scaffold protein component of the PI(3,5)P2 regulatory complex which regulates both the synthesis and turnover of phosphatidylinositol 3,5-bisphosphate (PtdIns(3,5)P2). Pentamerizes into a star-shaped structure and nucleates the assembly of the complex. The pentamer binds a single copy each of PIKFYVE and FIG4 and coordinates both PIKfyve kinase activity and FIG4 phosphatase activity, being required to maintain normal levels of phosphatidylinositol 3-phosphate (PtdIns(3)P) and phosphatidylinositol 5-phosphate (PtdIns(5)P). Plays a role in the biogenesis of endosome carrier vesicles (ECV) / multivesicular bodies (MVB) transport intermediates from early endosomes. In Homo sapiens (Human), this protein is Protein VAC14 homolog (VAC14).